The following is a 332-amino-acid chain: Ribosomal RNA small subunit methyltransferase H (332 aa).

Residues 42 to 44 (GGH), aspartate 62, phenylalanine 86, aspartate 105, and glutamine 112 each bind S-adenosyl-L-methionine.

This sequence belongs to the methyltransferase superfamily. RsmH family.

It is found in the cytoplasm. The enzyme catalyses cytidine(1402) in 16S rRNA + S-adenosyl-L-methionine = N(4)-methylcytidine(1402) in 16S rRNA + S-adenosyl-L-homocysteine + H(+). In terms of biological role, specifically methylates the N4 position of cytidine in position 1402 (C1402) of 16S rRNA. This chain is Ribosomal RNA small subunit methyltransferase H, found in Cupriavidus pinatubonensis (strain JMP 134 / LMG 1197) (Cupriavidus necator (strain JMP 134)).